A 360-amino-acid polypeptide reads, in one-letter code: Ribosomal RNA large subunit methyltransferase F (360 aa).

Residues 1-38 (MTRSTTPPMRAKHSSAKRSPSRSAAKVNPVSVKPNKPL) form a disordered region. The span at 10 to 20 (RAKHSSAKRSP) shows a compositional bias: basic residues.

Belongs to the methyltransferase superfamily. METTL16/RlmF family.

The protein localises to the cytoplasm. It catalyses the reaction adenosine(1618) in 23S rRNA + S-adenosyl-L-methionine = N(6)-methyladenosine(1618) in 23S rRNA + S-adenosyl-L-homocysteine + H(+). Functionally, specifically methylates the adenine in position 1618 of 23S rRNA. The polypeptide is Ribosomal RNA large subunit methyltransferase F (Shewanella frigidimarina (strain NCIMB 400)).